The chain runs to 398 residues: S-adenosylmethionine synthase (398 aa).

Histidine 16 contributes to the ATP binding site. Aspartate 18 is a Mg(2+) binding site. Glutamate 44 provides a ligand contact to K(+). The L-methionine site is built by glutamate 57 and glutamine 100. Residues 100–110 (QSPDIAQGVNE) form a flexible loop region. Residues 175 to 177 (DAK), 242 to 243 (RF), aspartate 251, 257 to 258 (RK), alanine 274, and lysine 278 each bind ATP. Aspartate 251 is an L-methionine binding site. L-methionine is bound at residue lysine 282.

The protein belongs to the AdoMet synthase family. As to quaternary structure, homotetramer; dimer of dimers. Mg(2+) is required as a cofactor. K(+) serves as cofactor.

It localises to the cytoplasm. The enzyme catalyses L-methionine + ATP + H2O = S-adenosyl-L-methionine + phosphate + diphosphate. It participates in amino-acid biosynthesis; S-adenosyl-L-methionine biosynthesis; S-adenosyl-L-methionine from L-methionine: step 1/1. Its function is as follows. Catalyzes the formation of S-adenosylmethionine (AdoMet) from methionine and ATP. The overall synthetic reaction is composed of two sequential steps, AdoMet formation and the subsequent tripolyphosphate hydrolysis which occurs prior to release of AdoMet from the enzyme. The polypeptide is S-adenosylmethionine synthase (Streptococcus agalactiae serotype Ia (strain ATCC 27591 / A909 / CDC SS700)).